Reading from the N-terminus, the 210-residue chain is Probable high-affinity nitrate transporter-activating protein 2.2 (210 aa).

The signal sequence occupies residues 1–23 (MARFGAVIHRVFLPLLLLLVVLG). Residues 182–202 (IEVAAGVLSAFSVAALAVFLV) form a helical membrane-spanning segment.

Belongs to the NAR2 family.

It is found in the cell membrane. Its function is as follows. Involved in nitrate transport. In Oryza sativa subsp. japonica (Rice), this protein is Probable high-affinity nitrate transporter-activating protein 2.2 (NAR2.2).